The primary structure comprises 337 residues: Ornithine carbamoyltransferase (337 aa).

Carbamoyl phosphate-binding positions include 56–59 (STRT), Q83, R107, and 134–137 (HPTQ). L-ornithine is bound by residues N168, D232, and 236-237 (SM). Residues 274–275 (CL) and R320 contribute to the carbamoyl phosphate site.

The protein belongs to the aspartate/ornithine carbamoyltransferase superfamily. OTCase family.

It localises to the cytoplasm. The catalysed reaction is carbamoyl phosphate + L-ornithine = L-citrulline + phosphate + H(+). The protein operates within amino-acid biosynthesis; L-arginine biosynthesis; L-arginine from L-ornithine and carbamoyl phosphate: step 1/3. In terms of biological role, reversibly catalyzes the transfer of the carbamoyl group from carbamoyl phosphate (CP) to the N(epsilon) atom of ornithine (ORN) to produce L-citrulline. This Shigella flexneri protein is Ornithine carbamoyltransferase (argI).